The chain runs to 439 residues: 3-phosphoshikimate 1-carboxyvinyltransferase (439 aa).

3-phosphoshikimate is bound by residues lysine 29, serine 30, and arginine 34. Lysine 29 provides a ligand contact to phosphoenolpyruvate. Positions 100 and 128 each coordinate phosphoenolpyruvate. Residues serine 173, serine 174, glutamine 175, serine 201, aspartate 321, and lysine 348 each contribute to the 3-phosphoshikimate site. Glutamine 175 is a phosphoenolpyruvate binding site. The Proton acceptor role is filled by aspartate 321. Residues arginine 352 and arginine 395 each contribute to the phosphoenolpyruvate site.

Belongs to the EPSP synthase family. As to quaternary structure, monomer.

The protein resides in the cytoplasm. The catalysed reaction is 3-phosphoshikimate + phosphoenolpyruvate = 5-O-(1-carboxyvinyl)-3-phosphoshikimate + phosphate. It functions in the pathway metabolic intermediate biosynthesis; chorismate biosynthesis. Catalyzes the transfer of the enolpyruvyl moiety of phosphoenolpyruvate (PEP) to the 5-hydroxyl of shikimate-3-phosphate (S3P) to produce enolpyruvyl shikimate-3-phosphate and inorganic phosphate. This Halobacterium salinarum (strain ATCC 700922 / JCM 11081 / NRC-1) (Halobacterium halobium) protein is 3-phosphoshikimate 1-carboxyvinyltransferase.